Reading from the N-terminus, the 66-residue chain is uncharacterized protein (66 aa).

Low complexity predominate over residues 1 to 20 (MTIINSISNFGSNNSFSNNN). The interval 1–47 (MTIINSISNFGSNNSFSNNNTVNQKSVIKRSKQMKNDNTSIGSSFKN) is disordered. Over residues 36–47 (NDNTSIGSSFKN) the composition is skewed to polar residues.

This is an uncharacterized protein from Dictyostelium discoideum (Social amoeba).